A 338-amino-acid polypeptide reads, in one-letter code: Holliday junction branch migration complex subunit RuvB (338 aa).

A large ATPase domain (RuvB-L) region spans residues 4 to 185 (EDQKILDAKP…FGIVAHMQFY (182 aa)). ATP contacts are provided by residues leucine 24, arginine 25, glycine 66, lysine 69, threonine 70, threonine 71, 132 to 134 (EDF), arginine 175, tyrosine 185, and arginine 222. Threonine 70 serves as a coordination point for Mg(2+). The interval 186–256 (PVSDLKLIAK…IVDNALNKLH (71 aa)) is small ATPAse domain (RuvB-S). Residues 259–338 (ARGLDETDLK…LQIPYQTGLS (80 aa)) form a head domain (RuvB-H) region. DNA-binding residues include arginine 314 and arginine 319.

Belongs to the RuvB family. As to quaternary structure, homohexamer. Forms an RuvA(8)-RuvB(12)-Holliday junction (HJ) complex. HJ DNA is sandwiched between 2 RuvA tetramers; dsDNA enters through RuvA and exits via RuvB. An RuvB hexamer assembles on each DNA strand where it exits the tetramer. Each RuvB hexamer is contacted by two RuvA subunits (via domain III) on 2 adjacent RuvB subunits; this complex drives branch migration. In the full resolvosome a probable DNA-RuvA(4)-RuvB(12)-RuvC(2) complex forms which resolves the HJ.

The protein resides in the cytoplasm. The enzyme catalyses ATP + H2O = ADP + phosphate + H(+). In terms of biological role, the RuvA-RuvB-RuvC complex processes Holliday junction (HJ) DNA during genetic recombination and DNA repair, while the RuvA-RuvB complex plays an important role in the rescue of blocked DNA replication forks via replication fork reversal (RFR). RuvA specifically binds to HJ cruciform DNA, conferring on it an open structure. The RuvB hexamer acts as an ATP-dependent pump, pulling dsDNA into and through the RuvAB complex. RuvB forms 2 homohexamers on either side of HJ DNA bound by 1 or 2 RuvA tetramers; 4 subunits per hexamer contact DNA at a time. Coordinated motions by a converter formed by DNA-disengaged RuvB subunits stimulates ATP hydrolysis and nucleotide exchange. Immobilization of the converter enables RuvB to convert the ATP-contained energy into a lever motion, pulling 2 nucleotides of DNA out of the RuvA tetramer per ATP hydrolyzed, thus driving DNA branch migration. The RuvB motors rotate together with the DNA substrate, which together with the progressing nucleotide cycle form the mechanistic basis for DNA recombination by continuous HJ branch migration. Branch migration allows RuvC to scan DNA until it finds its consensus sequence, where it cleaves and resolves cruciform DNA. This is Holliday junction branch migration complex subunit RuvB from Oenococcus oeni (strain ATCC BAA-331 / PSU-1).